A 1012-amino-acid polypeptide reads, in one-letter code: MIIRRFVRHLSTSKSSIRINAVGIQHLAPSLQNQLFGKSSPRLDEDLINMAKRHLKSNNLIGKKSSLNDPIEIQLPSLQGNTLDEHFYKLGSASLEPYNPLIDELLNLNIIEPQFEFAFQSGWTRYAPGEPSEKVPYPLEDSYFFDVETMYKVSQYPVMAVALSDKAWYGWVSPYLTEESTTNDHLIPLNTFETEKFIVGHNVSYDRARALEEYNLKQTKAFWMDTMALHVSVSGMCTRQRGTWIKHNKKEQENTMSVASIKSKVQNEELQELLDSTSIEDPMLEDNPWINKSSLNSLERVAEFYCKIKLKKDIRNSFATEDPDELRGNFDELMQYCAKDVFATGKVFQKVYPKFKKLIPHPVTLAALKDISSCILPTTTKWEDYIETSERLYQESRRMIEKNLHVICEETVKLKDDPTKPWENDPWLSQLDWTIDPIRLTKKGEIHKNQKLPGYPNWYKQLIVKNELKLTTKTRTSPLLLKLAWNGNPLYWIQTQGWCFKVPKNKTEEYEKLNFVMVSLKKLSEDPGFESIRAEDLKNFTFVKVPHPDGPSARVTNCMTKSCLGFFEKGFLNSQYPLAKDALQMAVASSYWTSSRERIMNQFVVFEDDMGYILPQIIPMGTITRRAVENTWLTASNAKKNRLGSELKSLIEAPKGYCFVGADVDSEELWIASLIGDSVFKIHGGTAIGWMTLEGTKNEGTDLHSKTAKILGISRNEAKIFNYGRIYGAGIKFTTTLLKKFNPALSDAEAKATANALYTATKGISGRYDKKSIWYGGSESIIFNRLEAIAEMAHPKTPVLGAGITAPLQKANLSTNNFLTSRINWAIQSSGVDYLHLLIISMDYLIKLFDIDARLCITVHDEIRYLVKEEDKFRAAYALQISNLWTRAMFCQQLGINEVPQSCAFFSAVDLDFVLRKEVDLDCVTPSNPDPIPCGKSLDIYQLLQQEDIKGADFPRTMHLNDVHYRKRTPVIEMFDKAVDDKTRKFMVSLQIAQDKTEFTKWKRSRGELIVH.

Belongs to the DNA polymerase type-A family. The cofactor is Mg(2+).

The protein localises to the mitochondrion. The catalysed reaction is DNA(n) + a 2'-deoxyribonucleoside 5'-triphosphate = DNA(n+1) + diphosphate. Its function is as follows. Involved in the replication of mitochondrial DNA. The sequence is that of DNA polymerase gamma (MIP1) from Komagataella pastoris (Yeast).